The following is a 204-amino-acid chain: MIGYLEGKILYRQGERIMILAGGVGYEVLLPSVVSASMTKGPGDETGLYIYFHQTEKQPKPVLIGFNSLEEREFFERFISVEAIGPIKAVSALCIPIGEIAAAIENKDSGALRKLKGIGARTADKIIATLRGKMAVFAGEHGGEPAGPAPVEENFHLLVLDVLVNQLGHKAAEAKELINQAIKRNPAISSPEELFDEVYRGETG.

A domain I region spans residues 1–67 (MIGYLEGKIL…QPKPVLIGFN (67 aa)). The interval 68 to 145 (SLEEREFFER…VFAGEHGGEP (78 aa)) is domain II. Residues 146 to 156 (AGPAPVEENFH) are flexible linker. The tract at residues 156–204 (HLLVLDVLVNQLGHKAAEAKELINQAIKRNPAISSPEELFDEVYRGETG) is domain III.

Belongs to the RuvA family. In terms of assembly, homotetramer. Forms an RuvA(8)-RuvB(12)-Holliday junction (HJ) complex. HJ DNA is sandwiched between 2 RuvA tetramers; dsDNA enters through RuvA and exits via RuvB. An RuvB hexamer assembles on each DNA strand where it exits the tetramer. Each RuvB hexamer is contacted by two RuvA subunits (via domain III) on 2 adjacent RuvB subunits; this complex drives branch migration. In the full resolvosome a probable DNA-RuvA(4)-RuvB(12)-RuvC(2) complex forms which resolves the HJ.

It is found in the cytoplasm. In terms of biological role, the RuvA-RuvB-RuvC complex processes Holliday junction (HJ) DNA during genetic recombination and DNA repair, while the RuvA-RuvB complex plays an important role in the rescue of blocked DNA replication forks via replication fork reversal (RFR). RuvA specifically binds to HJ cruciform DNA, conferring on it an open structure. The RuvB hexamer acts as an ATP-dependent pump, pulling dsDNA into and through the RuvAB complex. HJ branch migration allows RuvC to scan DNA until it finds its consensus sequence, where it cleaves and resolves the cruciform DNA. This Desulfatibacillum aliphaticivorans protein is Holliday junction branch migration complex subunit RuvA.